The chain runs to 206 residues: Probable GTP-binding protein EngB (206 aa).

An EngB-type G domain is found at 23-202; sequence HTAEVAFVGR…WGALLDTFGK (180 aa). GTP-binding positions include 31 to 38, 58 to 62, 83 to 86, 150 to 153, and 181 to 183; these read GRSNVGKS, GRTRT, DLPG, TKVD, and FSS. Serine 38 and threonine 60 together coordinate Mg(2+).

The protein belongs to the TRAFAC class TrmE-Era-EngA-EngB-Septin-like GTPase superfamily. EngB GTPase family. Requires Mg(2+) as cofactor.

In terms of biological role, necessary for normal cell division and for the maintenance of normal septation. The sequence is that of Probable GTP-binding protein EngB from Myxococcus xanthus (strain DK1622).